The following is a 563-amino-acid chain: Rhodopsin kinase GRK1 (563 aa).

Residues 1-15 are interaction with RCVRN; sequence MDFGSLETVVANSAF. The interval 1-189 is N-terminal; sequence MDFGSLETVV…LEAQPMGEDW (189 aa). S5 carries the phosphoserine modification. T8 carries the phosphothreonine modification. Position 21 is a phosphoserine; by PKA and autocatalysis (S21). Residues 58–175 enclose the RGS domain; sequence FESVCLEQPI…LGSLYFLRFL (118 aa). The 266-residue stretch at 190–455 folds into the Protein kinase domain; the sequence is FLDFRVLGKG…CDKLRAHPLF (266 aa). ATP-binding positions include 196–204 and K219; that span reads LGKGGFGEV. D317 functions as the Proton acceptor in the catalytic mechanism. Positions 456–521 constitute an AGC-kinase C-terminal domain; it reads KDLNWRQLEA…GNCPIPWQEE (66 aa). A C-terminal region spans residues 456–563; the sequence is KDLNWRQLEA…SSKSGMCLVS (108 aa). S491 carries the phosphoserine; by autocatalysis modification. T492 is modified (phosphothreonine; by autocatalysis). The tract at residues 539-563 is disordered; the sequence is QMPDDMKGISGGSSSSSKSGMCLVS. Low complexity predominate over residues 550–563; it reads GSSSSSKSGMCLVS. A Cysteine methyl ester modification is found at C560. C560 carries the S-farnesyl cysteine lipid modification. Residues 561 to 563 constitute a propeptide, removed in mature form; that stretch reads LVS.

This sequence belongs to the protein kinase superfamily. AGC Ser/Thr protein kinase family. GPRK subfamily. Interacts (via N-terminus) with RCVRN (via C-terminus); the interaction is Ca(2+)-dependent. Interacts (when prenylated) with PDE6D; this promotes release from membranes. May form a complex composed of RHO, GRK1 and RCVRN in a Ca(2+)-dependent manner; RCVRN prevents the interaction between GRK1 and RHO. In terms of processing, autophosphorylated, Ser-21 is a minor site of autophosphorylation compared to Ser-491 and Thr-492. Phosphorylation at Ser-21 is regulated by light and activated by cAMP. Farnesylation is required for full activity. Retinal-specific. Expressed in rods and cones cells.

Its subcellular location is the membrane. The protein resides in the cell projection. It is found in the cilium. The protein localises to the photoreceptor outer segment. It catalyses the reaction L-threonyl-[rhodopsin] + ATP = O-phospho-L-threonyl-[rhodopsin] + ADP + H(+). The enzyme catalyses L-seryl-[rhodopsin] + ATP = O-phospho-L-seryl-[rhodopsin] + ADP + H(+). Inhibited by RCVRN, which prevents the interaction between GRK1 and RHO. Inhibition is calcium-dependent. Inhibited by phosphorylation of Ser-21. In terms of biological role, retina-specific kinase involved in the signal turnoff via phosphorylation of rhodopsin (RHO), the G protein- coupled receptor that initiates the phototransduction cascade. This rapid desensitization is essential for scotopic vision and permits rapid adaptation to changes in illumination. May play a role in the maintenance of the outer nuclear layer in the retina. This is Rhodopsin kinase GRK1 from Homo sapiens (Human).